Here is a 180-residue protein sequence, read N- to C-terminus: NAD(P)H-quinone oxidoreductase subunit I, chloroplastic (180 aa).

4Fe-4S ferredoxin-type domains are found at residues 55–84 (GRIH…VNWR) and 95–124 (LNYS…MTEE). [4Fe-4S] cluster-binding residues include Cys-64, Cys-67, Cys-70, Cys-74, Cys-104, Cys-107, Cys-110, and Cys-114.

The protein belongs to the complex I 23 kDa subunit family. As to quaternary structure, NDH is composed of at least 16 different subunits, 5 of which are encoded in the nucleus. [4Fe-4S] cluster serves as cofactor.

It is found in the plastid. Its subcellular location is the chloroplast thylakoid membrane. The enzyme catalyses a plastoquinone + NADH + (n+1) H(+)(in) = a plastoquinol + NAD(+) + n H(+)(out). It catalyses the reaction a plastoquinone + NADPH + (n+1) H(+)(in) = a plastoquinol + NADP(+) + n H(+)(out). NDH shuttles electrons from NAD(P)H:plastoquinone, via FMN and iron-sulfur (Fe-S) centers, to quinones in the photosynthetic chain and possibly in a chloroplast respiratory chain. The immediate electron acceptor for the enzyme in this species is believed to be plastoquinone. Couples the redox reaction to proton translocation, and thus conserves the redox energy in a proton gradient. The polypeptide is NAD(P)H-quinone oxidoreductase subunit I, chloroplastic (Platanus occidentalis (Sycamore)).